A 219-amino-acid polypeptide reads, in one-letter code: Adenylate kinase (219 aa).

ATP is bound at residue G10 to T15. The tract at residues S30–V59 is NMP. AMP-binding positions include T31, R36, E57–V59, G85–R88, and Q92. Positions G122–D159 are LID. ATP contacts are provided by residues R123 and V132–Y133. Positions S129 to P152 are disordered. Over residues Y133–P152 the composition is skewed to basic and acidic residues. AMP-binding residues include R156 and R167. G203 contributes to the ATP binding site.

Belongs to the adenylate kinase family. Monomer.

The protein resides in the cytoplasm. The catalysed reaction is AMP + ATP = 2 ADP. Its pathway is purine metabolism; AMP biosynthesis via salvage pathway; AMP from ADP: step 1/1. Its function is as follows. Catalyzes the reversible transfer of the terminal phosphate group between ATP and AMP. Plays an important role in cellular energy homeostasis and in adenine nucleotide metabolism. In Alkalilimnicola ehrlichii (strain ATCC BAA-1101 / DSM 17681 / MLHE-1), this protein is Adenylate kinase.